The following is a 251-amino-acid chain: Phosphate import ATP-binding protein PstB 2 (251 aa).

The ABC transporter domain occupies 5–246 (LTTENLSLFY…PVKQETNDYI (242 aa)). Position 37 to 44 (37 to 44 (GPSGCGKS)) interacts with ATP.

Belongs to the ABC transporter superfamily. Phosphate importer (TC 3.A.1.7) family. The complex is composed of two ATP-binding proteins (PstB), two transmembrane proteins (PstC and PstA) and a solute-binding protein (PstS).

The protein resides in the cell membrane. It catalyses the reaction phosphate(out) + ATP + H2O = ADP + 2 phosphate(in) + H(+). In terms of biological role, part of the ABC transporter complex PstSACB involved in phosphate import. Responsible for energy coupling to the transport system. The protein is Phosphate import ATP-binding protein PstB 2 of Lactiplantibacillus plantarum (strain ATCC BAA-793 / NCIMB 8826 / WCFS1) (Lactobacillus plantarum).